The chain runs to 362 residues: O-methyltransferase 13 (362 aa).

S181, G205, D228, D248, and K262 together coordinate S-adenosyl-L-homocysteine. Position 228 (D228) interacts with S-adenosyl-L-methionine. Catalysis depends on H266, which acts as the Proton acceptor.

Belongs to the class I-like SAM-binding methyltransferase superfamily. Cation-independent O-methyltransferase family. In terms of assembly, homodimer. In terms of tissue distribution, mainly expressed in vascular and cortical tissues.

The enzyme catalyses dopamine + S-adenosyl-L-methionine = 3-methoxytyramine + S-adenosyl-L-homocysteine + H(+). Its pathway is aromatic compound metabolism. It participates in alkaloid biosynthesis. Functionally, O-methyltransferase participating in the biosynthesis of natural products derived from phenylethylamine, including mescaline, a natural hallucinogen potentially used in psychotherapeutic treatments. Catalyzes the O-methylation of dopamine and 4,5-dihydroxy-3-methoxyphenethylamine. The polypeptide is O-methyltransferase 13 (Lophophora williamsii (Peyote)).